The primary structure comprises 467 residues: Light-independent protochlorophyllide reductase subunit N (467 aa).

[4Fe-4S] cluster is bound by residues Cys22, Cys47, and Cys107.

It belongs to the BchN/ChlN family. Protochlorophyllide reductase is composed of three subunits; ChlL, ChlN and ChlB. Forms a heterotetramer of two ChlB and two ChlN subunits. [4Fe-4S] cluster is required as a cofactor.

The protein resides in the plastid. It is found in the chloroplast. It carries out the reaction chlorophyllide a + oxidized 2[4Fe-4S]-[ferredoxin] + 2 ADP + 2 phosphate = protochlorophyllide a + reduced 2[4Fe-4S]-[ferredoxin] + 2 ATP + 2 H2O. It functions in the pathway porphyrin-containing compound metabolism; chlorophyll biosynthesis (light-independent). Its function is as follows. Component of the dark-operative protochlorophyllide reductase (DPOR) that uses Mg-ATP and reduced ferredoxin to reduce ring D of protochlorophyllide (Pchlide) to form chlorophyllide a (Chlide). This reaction is light-independent. The NB-protein (ChlN-ChlB) is the catalytic component of the complex. This is Light-independent protochlorophyllide reductase subunit N from Chara vulgaris (Common stonewort).